We begin with the raw amino-acid sequence, 466 residues long: ATP synthase subunit beta (466 aa).

148 to 155 (GGAGVGKT) is an ATP binding site.

Belongs to the ATPase alpha/beta chains family. F-type ATPases have 2 components, CF(1) - the catalytic core - and CF(0) - the membrane proton channel. CF(1) has five subunits: alpha(3), beta(3), gamma(1), delta(1), epsilon(1). CF(0) has three main subunits: a(1), b(2) and c(9-12). The alpha and beta chains form an alternating ring which encloses part of the gamma chain. CF(1) is attached to CF(0) by a central stalk formed by the gamma and epsilon chains, while a peripheral stalk is formed by the delta and b chains.

It is found in the cell inner membrane. The catalysed reaction is ATP + H2O + 4 H(+)(in) = ADP + phosphate + 5 H(+)(out). In terms of biological role, produces ATP from ADP in the presence of a proton gradient across the membrane. The catalytic sites are hosted primarily by the beta subunits. The protein is ATP synthase subunit beta of Xylella fastidiosa (strain 9a5c).